A 340-amino-acid polypeptide reads, in one-letter code: Glycerol-3-phosphate dehydrogenase [NAD(P)+] (340 aa).

NADPH is bound by residues Ser13, Trp14, and Lys108. Lys108, Gly139, and Ser141 together coordinate sn-glycerol 3-phosphate. NADPH is bound at residue Ala143. The sn-glycerol 3-phosphate site is built by Lys194, Asp247, Ser257, Arg258, and Asn259. Lys194 functions as the Proton acceptor in the catalytic mechanism. Arg258 lines the NADPH pocket. NADPH contacts are provided by Val282 and Glu284.

The protein belongs to the NAD-dependent glycerol-3-phosphate dehydrogenase family.

The protein localises to the cytoplasm. It carries out the reaction sn-glycerol 3-phosphate + NAD(+) = dihydroxyacetone phosphate + NADH + H(+). The enzyme catalyses sn-glycerol 3-phosphate + NADP(+) = dihydroxyacetone phosphate + NADPH + H(+). Its pathway is membrane lipid metabolism; glycerophospholipid metabolism. Functionally, catalyzes the reduction of the glycolytic intermediate dihydroxyacetone phosphate (DHAP) to sn-glycerol 3-phosphate (G3P), the key precursor for phospholipid synthesis. This chain is Glycerol-3-phosphate dehydrogenase [NAD(P)+], found in Streptococcus sanguinis (strain SK36).